Consider the following 91-residue polypeptide: Proline, histidine and glycine-rich protein 1 (91 aa).

The tract at residues 1 to 91 is disordered; that stretch reads MHPGGKGHCG…HCGPHPGPHH (91 aa). 3 stretches are compositionally biased toward gly residues: residues 33–42, 49–63, and 70–82; these read HPGHGPGHCP, GHGG…GHCP, and GHGG…GPGH.

The polypeptide is Proline, histidine and glycine-rich protein 1 (Phgr1) (Mus musculus (Mouse)).